The following is a 181-amino-acid chain: Adenine phosphoribosyltransferase (181 aa).

Belongs to the purine/pyrimidine phosphoribosyltransferase family. Homodimer.

Its subcellular location is the cytoplasm. The enzyme catalyses AMP + diphosphate = 5-phospho-alpha-D-ribose 1-diphosphate + adenine. It functions in the pathway purine metabolism; AMP biosynthesis via salvage pathway; AMP from adenine: step 1/1. In terms of biological role, catalyzes a salvage reaction resulting in the formation of AMP, that is energically less costly than de novo synthesis. The chain is Adenine phosphoribosyltransferase from Aliivibrio fischeri (strain ATCC 700601 / ES114) (Vibrio fischeri).